The primary structure comprises 84 residues: Toxin CsE9 (84 aa).

An N-terminal signal peptide occupies residues 1-19 (MNSLLMITTCLILIGTVLA). The LCN-type CS-alpha/beta domain occupies 20 to 83 (EDGYLFDKRK…ISRTPGKTCK (64 aa)). 4 disulfide bridges follow: Cys-31–Cys-82, Cys-35–Cys-58, Cys-44–Cys-63, and Cys-48–Cys-65.

Belongs to the long (4 C-C) scorpion toxin superfamily. Sodium channel inhibitor family. Beta subfamily. In terms of tissue distribution, expressed by the venom gland.

It localises to the secreted. Its function is as follows. Beta toxins bind voltage-independently at site-4 of sodium channels (Nav) and shift the voltage of activation toward more negative potentials thereby affecting sodium channel activation and promoting spontaneous and repetitive firing. The protein is Toxin CsE9 of Centruroides sculpturatus (Arizona bark scorpion).